Consider the following 87-residue polypeptide: Large ribosomal subunit protein bL27 (87 aa).

This sequence belongs to the bacterial ribosomal protein bL27 family.

The sequence is that of Large ribosomal subunit protein bL27 from Renibacterium salmoninarum (strain ATCC 33209 / DSM 20767 / JCM 11484 / NBRC 15589 / NCIMB 2235).